A 257-amino-acid polypeptide reads, in one-letter code: Imidazole glycerol phosphate synthase subunit HisF (257 aa).

Active-site residues include aspartate 11 and aspartate 130.

Belongs to the HisA/HisF family. As to quaternary structure, heterodimer of HisH and HisF.

It localises to the cytoplasm. The enzyme catalyses 5-[(5-phospho-1-deoxy-D-ribulos-1-ylimino)methylamino]-1-(5-phospho-beta-D-ribosyl)imidazole-4-carboxamide + L-glutamine = D-erythro-1-(imidazol-4-yl)glycerol 3-phosphate + 5-amino-1-(5-phospho-beta-D-ribosyl)imidazole-4-carboxamide + L-glutamate + H(+). Its pathway is amino-acid biosynthesis; L-histidine biosynthesis; L-histidine from 5-phospho-alpha-D-ribose 1-diphosphate: step 5/9. In terms of biological role, IGPS catalyzes the conversion of PRFAR and glutamine to IGP, AICAR and glutamate. The HisF subunit catalyzes the cyclization activity that produces IGP and AICAR from PRFAR using the ammonia provided by the HisH subunit. This Shewanella putrefaciens (strain CN-32 / ATCC BAA-453) protein is Imidazole glycerol phosphate synthase subunit HisF.